The sequence spans 477 residues: Endo-1,4-beta-xylanase A (477 aa).

Residues 1–41 (MGSYALPRSGVRRSIRVLLLALVVGVLGTATALIAPPGAHA) form the signal peptide. The region spanning 42–340 (AESTLGAAAA…KAAYTAVLDA (299 aa)) is the GH10 domain. Residue glutamate 169 is the Proton donor of the active site. Glutamate 277 (nucleophile) is an active-site residue. The region spanning 361 to 477 (SGRCLDVPDA…NGSNQRWTRT (117 aa)) is the Ricin B-type lectin domain. Disulfide bonds link cysteine 364–cysteine 383, cysteine 406–cysteine 423, and cysteine 447–cysteine 466.

This sequence belongs to the glycosyl hydrolase 10 (cellulase F) family.

The protein resides in the secreted. The enzyme catalyses Endohydrolysis of (1-&gt;4)-beta-D-xylosidic linkages in xylans.. Its pathway is glycan degradation; xylan degradation. Its function is as follows. Contributes to hydrolyze hemicellulose, the major component of plant cell-walls. XLNA and XLNB seem to act sequentially on the substrate to yield xylobiose and xylose as carbon sources. The protein is Endo-1,4-beta-xylanase A (xlnA) of Streptomyces lividans.